A 614-amino-acid chain; its full sequence is Putative N(6)-adenosine-methyltransferase MT-A70-like (614 aa).

Residues 59-78 form a disordered region; it reads TPPLTNFNPPKSSSLQQLPQ. Residues 67–78 show a composition bias toward low complexity; the sequence is PPKSSSLQQLPQ. S-adenosyl-L-methionine is bound by residues 391 to 392 and Asp409; that span reads DI. The segment at 479–492 is positively charged region required for RNA-binding; that stretch reads RIIRTGRTGHWLNH. Residues Lys526, 549–552, and 562–563 contribute to the S-adenosyl-L-methionine site; these read RMHN and NQ. Residues 589 to 614 are disordered; that stretch reads PASPSRASAMELDSSVAAQTTTSAMM. The span at 604–614 shows a compositional bias: polar residues; the sequence is VAAQTTTSAMM.

Belongs to the MT-A70-like family.

The protein resides in the nucleus. The enzyme catalyses an adenosine in mRNA + S-adenosyl-L-methionine = an N(6)-methyladenosine in mRNA + S-adenosyl-L-homocysteine + H(+). Putative N6-methyltransferase that methylates adenosine residues of some mRNAs. N6-methyladenosine (m6A), which is present at internal sites of some mRNAs, may play a role in the efficiency of mRNA splicing, transport or translation. The chain is Putative N(6)-adenosine-methyltransferase MT-A70-like from Medicago truncatula (Barrel medic).